The sequence spans 213 residues: Transmembrane protein 186 (213 aa).

Residues 1–79 are Mitochondrial matrix-facing; that stretch reads MAALLRAVRR…FLSRLKLAQT (79 aa). Residues 80 to 100 form a helical membrane-spanning segment; it reads ALTVVALPPGYYLYSQGLLTL. Topologically, residues 101-102 are mitochondrial intermembrane; sequence NT. A helical membrane pass occupies residues 103-123; sequence VCLMSGISGFALTMLCWMSYF. The Mitochondrial matrix portion of the chain corresponds to 124-213; it reads LRRLVGILYL…QVFGVHQMLK (90 aa).

It belongs to the TMEM186 family. Part of the mitochondrial complex I assembly/MCIA complex that comprises at least the core subunits TMEM126B, NDUFAF1, ECSIT and ACAD9 and complement subunits such as COA1 and TMEM186. Interacts with MT-ND3.

It localises to the mitochondrion inner membrane. Functionally, as part of the MCIA complex, required for efficient assembly of the mitochondrial complex I. This chain is Transmembrane protein 186, found in Homo sapiens (Human).